The sequence spans 630 residues: Polyphenol oxidase A, chloroplastic (630 aa).

The segment at 1-25 (MASLCSNSSSTSLKTPFTSSTTCLS) is disordered. A chloroplast-targeting transit peptide spans 1-87 (MASLCSNSSS…ANAIPLAASA (87 aa)). 2 disulfides stabilise this stretch: Cys-98–Cys-114 and Cys-113–Cys-181. Cu cation-binding residues include His-180, His-198, His-207, His-328, His-332, and His-370. A cross-link (2'-(S-cysteinyl)-histidine (Cys-His)) is located at residues 184-198 (CNGGYSIDGKVLQVH).

This sequence belongs to the tyrosinase family. The cofactor is Cu(2+).

Its subcellular location is the plastid. It is found in the chloroplast thylakoid lumen. The enzyme catalyses 2 catechol + O2 = 2 1,2-benzoquinone + 2 H2O. Its function is as follows. Catalyzes the oxidation of mono- and o-diphenols to o-diquinones. This is Polyphenol oxidase A, chloroplastic from Solanum lycopersicum (Tomato).